A 314-amino-acid polypeptide reads, in one-letter code: Putative glycosyltransferase ORF31 (314 aa).

The protein belongs to the glycosyltransferase group 1 family.

The polypeptide is Putative glycosyltransferase ORF31 (Haloarcula hispanica (His1V)).